The sequence spans 533 residues: Berberine bridge enzyme-like 28 (533 aa).

Residues 1-23 form the signal peptide; sequence MEFSSFLFTILLFSLNISPLVSA. Cys34 and Cys96 are disulfide-bonded. In terms of domain architecture, FAD-binding PCMH-type spans 74–249; it reads ETPKPVSIIT…LSWKVKLVDV (176 aa). A Pros-8alpha-FAD histidine modification is found at His111. Asn142 and Asn440 each carry an N-linked (GlcNAc...) asparagine glycan.

This sequence belongs to the oxygen-dependent FAD-linked oxidoreductase family. FAD serves as cofactor.

It localises to the secreted. The protein resides in the cell wall. Its function is as follows. Involved in adaptation to salt stress. This chain is Berberine bridge enzyme-like 28, found in Arabidopsis thaliana (Mouse-ear cress).